We begin with the raw amino-acid sequence, 1000 residues long: Bifunctional glutamine synthetase adenylyltransferase/adenylyl-removing enzyme (1000 aa).

Residues 1 to 481 (MTAPGRRSST…LHEKLFYRPL (481 aa)) form an adenylyl removase region. The tract at residues 487–1000 (QLAPGEARLS…AVVDEQFYGA (514 aa)) is adenylyl transferase.

This sequence belongs to the GlnE family. Mg(2+) is required as a cofactor.

It carries out the reaction [glutamine synthetase]-O(4)-(5'-adenylyl)-L-tyrosine + phosphate = [glutamine synthetase]-L-tyrosine + ADP. The enzyme catalyses [glutamine synthetase]-L-tyrosine + ATP = [glutamine synthetase]-O(4)-(5'-adenylyl)-L-tyrosine + diphosphate. Its function is as follows. Involved in the regulation of glutamine synthetase GlnA, a key enzyme in the process to assimilate ammonia. When cellular nitrogen levels are high, the C-terminal adenylyl transferase (AT) inactivates GlnA by covalent transfer of an adenylyl group from ATP to specific tyrosine residue of GlnA, thus reducing its activity. Conversely, when nitrogen levels are low, the N-terminal adenylyl removase (AR) activates GlnA by removing the adenylyl group by phosphorolysis, increasing its activity. The regulatory region of GlnE binds the signal transduction protein PII (GlnB) which indicates the nitrogen status of the cell. This is Bifunctional glutamine synthetase adenylyltransferase/adenylyl-removing enzyme from Streptomyces avermitilis (strain ATCC 31267 / DSM 46492 / JCM 5070 / NBRC 14893 / NCIMB 12804 / NRRL 8165 / MA-4680).